The following is a 301-amino-acid chain: Ribosomal RNA small subunit methyltransferase H (301 aa).

S-adenosyl-L-methionine is bound by residues 31 to 33, Asp49, Phe76, Asp97, and Gln104; that span reads GGY.

It belongs to the methyltransferase superfamily. RsmH family.

It is found in the cytoplasm. The catalysed reaction is cytidine(1402) in 16S rRNA + S-adenosyl-L-methionine = N(4)-methylcytidine(1402) in 16S rRNA + S-adenosyl-L-homocysteine + H(+). Functionally, specifically methylates the N4 position of cytidine in position 1402 (C1402) of 16S rRNA. The chain is Ribosomal RNA small subunit methyltransferase H from Ehrlichia ruminantium (strain Welgevonden).